Reading from the N-terminus, the 497-residue chain is L-asparagine permease (497 aa).

12 consecutive transmembrane segments (helical) span residues 34–54 (QVQM…GAGA), 58–78 (MAGP…FFIL), 109–129 (VAGW…ITAV), 146–166 (VFAL…VKWF), 171–191 (FWFA…GTIF), 219–239 (LLPA…IELV), 264–284 (IGLF…WNAY), 298–318 (LGVP…ALSS), 353–373 (YAGI…NYLV), 378–398 (FEIV…FIMV), 422–442 (APFT…LMAF), and 448–468 (TYTI…WFGV).

It belongs to the amino acid-polyamine-organocation (APC) superfamily. Amino acid transporter (AAT) (TC 2.A.3.1) family.

The protein localises to the cell inner membrane. This Salmonella typhimurium (strain LT2 / SGSC1412 / ATCC 700720) protein is L-asparagine permease (ansP).